We begin with the raw amino-acid sequence, 117 residues long: Ribonuclease P protein component (117 aa).

This sequence belongs to the RnpA family. As to quaternary structure, consists of a catalytic RNA component (M1 or rnpB) and a protein subunit.

The catalysed reaction is Endonucleolytic cleavage of RNA, removing 5'-extranucleotides from tRNA precursor.. In terms of biological role, RNaseP catalyzes the removal of the 5'-leader sequence from pre-tRNA to produce the mature 5'-terminus. It can also cleave other RNA substrates such as 4.5S RNA. The protein component plays an auxiliary but essential role in vivo by binding to the 5'-leader sequence and broadening the substrate specificity of the ribozyme. This chain is Ribonuclease P protein component, found in Staphylococcus aureus (strain MW2).